The primary structure comprises 335 residues: tRNA N6-adenosine threonylcarbamoyltransferase (335 aa).

His-111 and His-115 together coordinate Fe cation. Substrate-binding positions include Leu-133–Gly-137, Asp-166, Gly-179, and Asn-276. Fe cation is bound at residue Asp-301.

Belongs to the KAE1 / TsaD family. It depends on Fe(2+) as a cofactor.

It is found in the cytoplasm. It carries out the reaction L-threonylcarbamoyladenylate + adenosine(37) in tRNA = N(6)-L-threonylcarbamoyladenosine(37) in tRNA + AMP + H(+). Functionally, required for the formation of a threonylcarbamoyl group on adenosine at position 37 (t(6)A37) in tRNAs that read codons beginning with adenine. Is involved in the transfer of the threonylcarbamoyl moiety of threonylcarbamoyl-AMP (TC-AMP) to the N6 group of A37, together with TsaE and TsaB. TsaD likely plays a direct catalytic role in this reaction. In Wolbachia sp. subsp. Brugia malayi (strain TRS), this protein is tRNA N6-adenosine threonylcarbamoyltransferase.